The chain runs to 241 residues: Phycocyanobilin:ferredoxin oxidoreductase (241 aa).

Belongs to the HY2 family.

The catalysed reaction is (2R,3Z)-phycocyanobilin + 4 oxidized [2Fe-2S]-[ferredoxin] = biliverdin IXalpha + 4 reduced [2Fe-2S]-[ferredoxin] + 4 H(+). Its function is as follows. Catalyzes the four-electron reduction of biliverdin IX-alpha (2-electron reduction at both the A and D rings); the reaction proceeds via an isolatable 2-electron intermediate, 181,182-dihydrobiliverdin. The chain is Phycocyanobilin:ferredoxin oxidoreductase from Prochlorococcus marinus (strain MIT 9215).